Consider the following 72-residue polypeptide: Translation initiation factor IF-1 (72 aa).

One can recognise an S1-like domain in the interval 1–72 (MSKEDVIEMQ…TRGRITWRAK (72 aa)).

This sequence belongs to the IF-1 family. As to quaternary structure, component of the 30S ribosomal translation pre-initiation complex which assembles on the 30S ribosome in the order IF-2 and IF-3, IF-1 and N-formylmethionyl-tRNA(fMet); mRNA recruitment can occur at any time during PIC assembly.

It localises to the cytoplasm. In terms of biological role, one of the essential components for the initiation of protein synthesis. Stabilizes the binding of IF-2 and IF-3 on the 30S subunit to which N-formylmethionyl-tRNA(fMet) subsequently binds. Helps modulate mRNA selection, yielding the 30S pre-initiation complex (PIC). Upon addition of the 50S ribosomal subunit IF-1, IF-2 and IF-3 are released leaving the mature 70S translation initiation complex. This chain is Translation initiation factor IF-1, found in Clostridium acetobutylicum (strain ATCC 824 / DSM 792 / JCM 1419 / IAM 19013 / LMG 5710 / NBRC 13948 / NRRL B-527 / VKM B-1787 / 2291 / W).